The chain runs to 487 residues: ATP synthase subunit beta (487 aa).

Residue 164 to 171 (GGAGVGKT) coordinates ATP.

This sequence belongs to the ATPase alpha/beta chains family. In terms of assembly, F-type ATPases have 2 components, CF(1) - the catalytic core - and CF(0) - the membrane proton channel. CF(1) has five subunits: alpha(3), beta(3), gamma(1), delta(1), epsilon(1). CF(0) has four main subunits: a(1), b(1), b'(1) and c(9-12).

The protein resides in the cellular thylakoid membrane. The enzyme catalyses ATP + H2O + 4 H(+)(in) = ADP + phosphate + 5 H(+)(out). Its function is as follows. Produces ATP from ADP in the presence of a proton gradient across the membrane. The catalytic sites are hosted primarily by the beta subunits. This Synechococcus sp. (strain CC9311) protein is ATP synthase subunit beta.